Here is a 272-residue protein sequence, read N- to C-terminus: Shikimate dehydrogenase (NADP(+)) (272 aa).

Shikimate-binding positions include 14–16 and T61; that span reads SKS. Catalysis depends on K65, which acts as the Proton acceptor. E77 contacts NADP(+). Shikimate is bound by residues N86 and D102. NADP(+) is bound by residues 126-130, 149-154, and M213; these read GAGGA and NRTYSR. Y215 serves as a coordination point for shikimate. G237 provides a ligand contact to NADP(+).

Belongs to the shikimate dehydrogenase family. As to quaternary structure, homodimer.

It catalyses the reaction shikimate + NADP(+) = 3-dehydroshikimate + NADPH + H(+). The protein operates within metabolic intermediate biosynthesis; chorismate biosynthesis; chorismate from D-erythrose 4-phosphate and phosphoenolpyruvate: step 4/7. Its function is as follows. Involved in the biosynthesis of the chorismate, which leads to the biosynthesis of aromatic amino acids. Catalyzes the reversible NADPH linked reduction of 3-dehydroshikimate (DHSA) to yield shikimate (SA). The protein is Shikimate dehydrogenase (NADP(+)) of Enterobacter sp. (strain 638).